A 397-amino-acid polypeptide reads, in one-letter code: Fractalkine (397 aa).

The N-terminal stretch at 1-24 (MAPISLSWLLRLATFCHLTVLLAG) is a signal peptide. Residues 25 to 100 (QHHGVTKCNI…RQAAALTRNG (76 aa)) are chemokine and involved in interaction with ITGAV:ITGB3 and ITGA4:ITGB1. Residues 25-341 (QHHGVTKCNI…PDAQAATRRQ (317 aa)) are Extracellular-facing. 2 disulfide bridges follow: Cys32-Cys58 and Cys36-Cys74. Residue Asn33 is glycosylated (N-linked (GlcNAc...) asparagine). Positions 101-341 (GTFEKQIGEV…PDAQAATRRQ (241 aa)) are mucin-like stalk. Disordered stretches follow at residues 128 to 265 (EPEA…REEM) and 289 to 309 (VPVS…SWTP). Residues 133 to 147 (GESSSLEPTPSSQEA) show a composition bias toward polar residues. O-linked (GalNAc...) threonine glycosylation is present at Thr183. Residues 193–202 (TAATWQSSAP) are compositionally biased toward polar residues. A compositionally biased stretch (low complexity) spans 219–243 (PSTQDPSTQASTASSPAPEENAPSE). Residue Ser253 is glycosylated (O-linked (GalNAc...) serine). An O-linked (GalNAc...) threonine glycan is attached at Thr329. The chain crosses the membrane as a helical span at residues 342–362 (AVGLLAFLGLLFCLGVAMFTY). Topologically, residues 363 to 397 (QSLQGCPRKMAGEMAEGLRYIPRSCGSNSYVLVPV) are cytoplasmic.

The protein belongs to the intercrine delta family. Monomer. Forms a ternary complex with CX3CR1 and ITGAV:ITGB3 or ITGA4:ITGB1. As to quaternary structure, (Microbial infection) Interacts with pox virus crmD; this inhibits cell migration mediated by CX3CL1. In terms of assembly, (Microbial infection) Interacts (via N-terminus) with human cytomegalovirus (HHV-5) US28. (Microbial infection) Interacts with P.falciparum (strain 3D7) CBP1 and CBP2 (via their extracellular domains); the interaction mediates the adhesion of infected erythrocytes with endothelial cells. A soluble short 95 kDa form may be released by proteolytic cleavage from the long membrane-anchored form. Post-translationally, O-glycosylated with core 1 or possibly core 8 glycans. In terms of tissue distribution, expressed in the seminal plasma, endometrial fluid and follicular fluid (at protein level). Small intestine, colon, testis, prostate, heart, brain, lung, skeletal muscle, kidney and pancreas. Most abundant in the brain and heart.

Its subcellular location is the cell membrane. The protein resides in the secreted. Its function is as follows. Chemokine that acts as a ligand for both CX3CR1 and integrins ITGAV:ITGB3 and ITGA4:ITGB1. The CX3CR1-CX3CL1 signaling exerts distinct functions in different tissue compartments, such as immune response, inflammation, cell adhesion and chemotaxis. Regulates leukocyte adhesion and migration processes at the endothelium. Can activate integrins in both a CX3CR1-dependent and CX3CR1-independent manner. In the presence of CX3CR1, activates integrins by binding to the classical ligand-binding site (site 1) in integrins. In the absence of CX3CR1, binds to a second site (site 2) in integrins which is distinct from site 1 and enhances the binding of other integrin ligands to site 1. In terms of biological role, the soluble form is chemotactic for T-cells and monocytes, but not for neutrophils. The membrane-bound form promotes adhesion of those leukocytes to endothelial cells. Functionally, (Microbial infection) Mediates the cytoadherence of erythrocytes infected with parasite P.falciparum (strain 3D7) with endothelial cells by interacting with P.falciparum CBP1 and CBP2 expressed at the surface of erythrocytes. The adhesion prevents the elimination of infected erythrocytes by the spleen. The protein is Fractalkine of Homo sapiens (Human).